The chain runs to 337 residues: UDP-3-O-acylglucosamine N-acyltransferase 1 (337 aa).

The active-site Proton acceptor is the His238.

It belongs to the transferase hexapeptide repeat family. LpxD subfamily. As to quaternary structure, homotrimer.

It carries out the reaction a UDP-3-O-[(3R)-3-hydroxyacyl]-alpha-D-glucosamine + a (3R)-hydroxyacyl-[ACP] = a UDP-2-N,3-O-bis[(3R)-3-hydroxyacyl]-alpha-D-glucosamine + holo-[ACP] + H(+). The protein operates within bacterial outer membrane biogenesis; LPS lipid A biosynthesis. Its function is as follows. Catalyzes the N-acylation of UDP-3-O-acylglucosamine using 3-hydroxyacyl-ACP as the acyl donor. Is involved in the biosynthesis of lipid A, a phosphorylated glycolipid that anchors the lipopolysaccharide to the outer membrane of the cell. The protein is UDP-3-O-acylglucosamine N-acyltransferase 1 of Koribacter versatilis (strain Ellin345).